The primary structure comprises 279 residues: Small ribosomal subunit protein uS2 (279 aa).

It belongs to the universal ribosomal protein uS2 family. As to quaternary structure, component of the small ribosomal subunit. Mature ribosomes consist of a small (40S) and a large (60S) subunit. The 40S subunit contains about 33 different proteins and 1 molecule of RNA (18S). The 60S subunit contains about 49 different proteins and 3 molecules of RNA (25S, 5.8S and 5S). Interacts with ribosomal protein S21.

It localises to the cytoplasm. In terms of biological role, required for the assembly and/or stability of the 40S ribosomal subunit. Required for the processing of the 20S rRNA-precursor to mature 18S rRNA in a late step of the maturation of 40S ribosomal subunits. The polypeptide is Small ribosomal subunit protein uS2 (Chlamydomonas reinhardtii (Chlamydomonas smithii)).